The following is a 447-amino-acid chain: GTPase Der (447 aa).

2 EngA-type G domains span residues 3 to 167 and 181 to 354; these read PVIA…FAER and TRIA…AAAM. GTP-binding positions include 9–16, 56–60, 119–122, 187–194, 234–238, and 299–302; these read GRPNVGKS, DTGGF, NKAE, DTAGL, and NKWD. The 85-residue stretch at 355–439 folds into the KH-like domain; that stretch reads VKLPTPKLTR…PLRIEFRTNK (85 aa).

This sequence belongs to the TRAFAC class TrmE-Era-EngA-EngB-Septin-like GTPase superfamily. EngA (Der) GTPase family. Associates with the 50S ribosomal subunit.

GTPase that plays an essential role in the late steps of ribosome biogenesis. In Ralstonia pickettii (strain 12J), this protein is GTPase Der.